Reading from the N-terminus, the 252-residue chain is TVP38/TMEM64 family membrane protein Mb1528c (252 aa).

6 consecutive transmembrane segments (helical) span residues 32–52, 64–84, 88–108, 149–169, 177–197, and 209–229; these read IVGT…VPVP, LGAW…VPPF, AFTL…IAVV, WLAI…INYA, ILSF…AVVI, and LLIL…VYEI.

This sequence belongs to the TVP38/TMEM64 family.

Its subcellular location is the cell membrane. This chain is TVP38/TMEM64 family membrane protein Mb1528c, found in Mycobacterium bovis (strain ATCC BAA-935 / AF2122/97).